The chain runs to 85 residues: Small ribosomal subunit protein uS17 (85 aa).

It belongs to the universal ribosomal protein uS17 family. As to quaternary structure, part of the 30S ribosomal subunit.

Its function is as follows. One of the primary rRNA binding proteins, it binds specifically to the 5'-end of 16S ribosomal RNA. In Aggregatibacter actinomycetemcomitans (Actinobacillus actinomycetemcomitans), this protein is Small ribosomal subunit protein uS17.